The primary structure comprises 161 residues: Transcriptional repressor NrdR (161 aa).

The span at 1-11 (MRCPSCNSLDT) shows a compositional bias: polar residues. The disordered stretch occupies residues 1–20 (MRCPSCNSLDTQVKDSRPTE). A zinc finger lies at 3–34 (CPSCNSLDTQVKDSRPTEDSSVIRRRRVCVTC). One can recognise an ATP-cone domain in the interval 49–139 (LTVIKRNGRR…VYRNFREAKD (91 aa)).

This sequence belongs to the NrdR family. The cofactor is Zn(2+).

Functionally, negatively regulates transcription of bacterial ribonucleotide reductase nrd genes and operons by binding to NrdR-boxes. In Bradyrhizobium sp. (strain BTAi1 / ATCC BAA-1182), this protein is Transcriptional repressor NrdR.